Reading from the N-terminus, the 33-residue chain is Phospholipase A2 homolog BmarPLA2 (33 aa).

The protein belongs to the phospholipase A2 family. Group II subfamily. K49 sub-subfamily. As to quaternary structure, homodimer; non-covalently linked. In terms of tissue distribution, expressed by the venom gland.

The protein resides in the secreted. Its function is as follows. Snake phospholipase A2 homolog that lacks enzymatic activity. May display myotoxin activity. In isolated heart decreases cardiac frequency. Also decreases mean arterial pressure. Does not show antimicrobial activity. Does not change renal parameters (such as perfusion pressure, renal vascular resistance, urinary flow, glomerular filtration rate and sodium tubular transport). This is Phospholipase A2 homolog BmarPLA2 from Bothrops marajoensis (Marajo lancehead).